The following is a 418-amino-acid chain: Glucose-1-phosphate adenylyltransferase (418 aa).

Alpha-D-glucose 1-phosphate is bound by residues Tyr-107, Gly-172, 187–188, and Ser-205; that span reads EK.

The protein belongs to the bacterial/plant glucose-1-phosphate adenylyltransferase family. In terms of assembly, homotetramer.

It catalyses the reaction alpha-D-glucose 1-phosphate + ATP + H(+) = ADP-alpha-D-glucose + diphosphate. It participates in glycan biosynthesis; glycogen biosynthesis. In terms of biological role, involved in the biosynthesis of ADP-glucose, a building block required for the elongation reactions to produce glycogen. Catalyzes the reaction between ATP and alpha-D-glucose 1-phosphate (G1P) to produce pyrophosphate and ADP-Glc. The chain is Glucose-1-phosphate adenylyltransferase from Gemmatimonas aurantiaca (strain DSM 14586 / JCM 11422 / NBRC 100505 / T-27).